The chain runs to 217 residues: Probable transaldolase (217 aa).

Lysine 83 functions as the Schiff-base intermediate with substrate in the catalytic mechanism.

Belongs to the transaldolase family. Type 3B subfamily.

The protein localises to the cytoplasm. It carries out the reaction D-sedoheptulose 7-phosphate + D-glyceraldehyde 3-phosphate = D-erythrose 4-phosphate + beta-D-fructose 6-phosphate. Its pathway is carbohydrate degradation; pentose phosphate pathway; D-glyceraldehyde 3-phosphate and beta-D-fructose 6-phosphate from D-ribose 5-phosphate and D-xylulose 5-phosphate (non-oxidative stage): step 2/3. In terms of biological role, transaldolase is important for the balance of metabolites in the pentose-phosphate pathway. The protein is Probable transaldolase of Anaeromyxobacter sp. (strain K).